The following is a 585-amino-acid chain: Aspartate--tRNA ligase (585 aa).

Residue Glu-173 coordinates L-aspartate. The segment at Gln-197 to Lys-200 is aspartate. Arg-219 lines the L-aspartate pocket. ATP contacts are provided by residues Arg-219 to Glu-221 and Gln-228. His-446 provides a ligand contact to L-aspartate. An ATP-binding site is contributed by Glu-480. Arg-487 contacts L-aspartate. An ATP-binding site is contributed by Gly-532–Arg-535.

Belongs to the class-II aminoacyl-tRNA synthetase family. Type 1 subfamily. As to quaternary structure, homodimer.

It localises to the cytoplasm. The catalysed reaction is tRNA(Asp) + L-aspartate + ATP = L-aspartyl-tRNA(Asp) + AMP + diphosphate. Its function is as follows. Catalyzes the attachment of L-aspartate to tRNA(Asp) in a two-step reaction: L-aspartate is first activated by ATP to form Asp-AMP and then transferred to the acceptor end of tRNA(Asp). The polypeptide is Aspartate--tRNA ligase (Bacteroides fragilis (strain ATCC 25285 / DSM 2151 / CCUG 4856 / JCM 11019 / LMG 10263 / NCTC 9343 / Onslow / VPI 2553 / EN-2)).